Here is a 361-residue protein sequence, read N- to C-terminus: MLYNLLLPHIHNSHIANLFHYITFRSGLAIIITLSLSFITGPILIEFLRSIQKNGQPIRSDGPESHQTKVGTPTMGGIMIILSSCLSTLLLADLTNKYIWITLFGFISFGIIGFMDDYAKVTKNNHYGVRGKSKLLLQGIISVIICVLLEYLDKSPSHLLNVPFFKNLSLDLGYCYIVFAIFVIVGSSNAVNLTDGLDGLATVPIAFTAGSFALISYLVGNLIYSNYLQLTYIPNTGELTVLCAGLVGSCLGFLWFNAQPAEVFMGDTGSLSLGGVLGIISVITKHEIVLAIVGGLFVIETASVILQVYYFKATKGKRIFKMAPLHHHFEKHGWAESKVVIRFWIISVIFALIGLSSLKLR.

Helical transmembrane passes span 28–48 (LAII…IEFL), 74–94 (TMGG…LADL), 99–119 (IWIT…DDYA), 133–153 (SKLL…EYLD), 168–188 (LSLD…VGSS), 203–223 (VPIA…GNLI), 236–256 (TGEL…FLWF), 263–283 (VFMG…ISVI), 288–308 (IVLA…ILQV), and 338–358 (KVVI…LSSL).

This sequence belongs to the glycosyltransferase 4 family. MraY subfamily. Mg(2+) is required as a cofactor.

The protein resides in the cell membrane. It catalyses the reaction UDP-N-acetyl-alpha-D-muramoyl-L-alanyl-gamma-D-glutamyl-meso-2,6-diaminopimeloyl-D-alanyl-D-alanine + di-trans,octa-cis-undecaprenyl phosphate = di-trans,octa-cis-undecaprenyl diphospho-N-acetyl-alpha-D-muramoyl-L-alanyl-D-glutamyl-meso-2,6-diaminopimeloyl-D-alanyl-D-alanine + UMP. It participates in cell wall biogenesis; peptidoglycan biosynthesis. Catalyzes the initial step of the lipid cycle reactions in the biosynthesis of the cell wall peptidoglycan: transfers peptidoglycan precursor phospho-MurNAc-pentapeptide from UDP-MurNAc-pentapeptide onto the lipid carrier undecaprenyl phosphate, yielding undecaprenyl-pyrophosphoryl-MurNAc-pentapeptide, known as lipid I. The polypeptide is Phospho-N-acetylmuramoyl-pentapeptide-transferase (Rickettsia rickettsii).